The following is a 414-amino-acid chain: Putative cytochrome P450 126 (414 aa).

Cys-363 serves as a coordination point for heme.

The protein belongs to the cytochrome P450 family. Heme is required as a cofactor.

This Mycobacterium tuberculosis (strain CDC 1551 / Oshkosh) protein is Putative cytochrome P450 126 (cyp126).